The primary structure comprises 623 residues: Activator of C kinase protein 1 (623 aa).

The segment at 141-230 (KESLGSPAVQ…GSSGGEDKLS (90 aa)) is disordered. A compositionally biased stretch (polar residues) spans 152–161 (ASISSGNRIS). Residues 176–193 (SESRILQEKVYRTEEKAP) are compositionally biased toward basic and acidic residues. Residues K184 and K191 each participate in a glycyl lysine isopeptide (Lys-Gly) (interchain with G-Cter in ubiquitin) cross-link. The segment covering 206–215 (KINQPPTGSA) has biased composition (polar residues). 4 Sel1-like repeats span residues 318–361 (PPAM…KLNN), 408–444 (SACM…QKGD), 495–531 (PLAQ…AAQP), and 576–611 (ARTE…RMGF).

In Saccharomyces cerevisiae (strain ATCC 204508 / S288c) (Baker's yeast), this protein is Activator of C kinase protein 1 (ACK1).